Here is a 127-residue protein sequence, read N- to C-terminus: Mitochondrial pyruvate carrier 2 (127 aa).

Over 2-40 (SAAGARGLRATYHRLLDKVELMLPEKLRPLYNHPAGPRT) the chain is Mitochondrial matrix. Residues 41 to 61 (VFFWAPIMKRGLVCAGLADMA) form a helical membrane-spanning segment. Residues 62–72 (RPAEKLSTAQS) lie on the Mitochondrial intermembrane side of the membrane. The chain crosses the membrane as a helical span at residues 73–90 (AVLMATGFIWSRYSLVII). Over 91–95 (PKNWS) the chain is Mitochondrial matrix. A helical membrane pass occupies residues 96-115 (LFAVNFFVGAAGASQLFRIW). The Mitochondrial intermembrane portion of the chain corresponds to 116 to 127 (RYNQELKAKAHK).

Belongs to the mitochondrial pyruvate carrier (MPC) (TC 2.A.105) family. Homodimer. Homooligomer. Forms heterodimers with MPC1 and MPC1L. The heterodimer is the more stable and dominant form.

The protein localises to the mitochondrion inner membrane. The catalysed reaction is pyruvate(out) + H(+)(out) = pyruvate(in) + H(+)(in). Mediates the uptake of pyruvate into mitochondria. In Pongo abelii (Sumatran orangutan), this protein is Mitochondrial pyruvate carrier 2 (MPC2).